Here is a 256-residue protein sequence, read N- to C-terminus: Omega-amidase YafV (256 aa).

Positions 4-234 (LKITLLQQPL…ATRIDAELSM (231 aa)) constitute a CN hydrolase domain. The Proton acceptor role is filled by Glu-42. Catalysis depends on Lys-107, which acts as the Proton donor. Residue Cys-141 is the Nucleophile of the active site.

The protein belongs to the carbon-nitrogen hydrolase superfamily. NIT1/NIT2 family.

The enzyme catalyses a monoamide of a dicarboxylate + H2O = a dicarboxylate + NH4(+). Hydrolyzes alpha-ketoglutaramate (a-KGM) to alpha-ketoglutarate (alpha-KG) and ammonia, has weak activity on L-glutamine, almost no activity on deaminated glutathione (dGSH) and none on glutathione. May function as a metabolite repair enzyme. The protein is Omega-amidase YafV (yafV) of Escherichia coli (strain K12).